We begin with the raw amino-acid sequence, 441 residues long: Zinc finger and BTB domain-containing protein 8A (441 aa).

The BTB domain maps to 24–92 (CDCSILVEGK…VYSGKLSLTG (69 aa)). Composition is skewed to polar residues over residues 146–170 (ERSSFYSSGWQDESSSPRSHLSPDQ) and 178–197 (KSWSKYNYHPASQRNTQQPL). The tract at residues 146-252 (ERSSFYSSGW…SEEQAQMNAE (107 aa)) is disordered. A phosphoserine mark is found at Ser161 and Ser167. Glycyl lysine isopeptide (Lys-Gly) (interchain with G-Cter in SUMO2) cross-links involve residues Lys178, Lys182, and Lys199. Over residues 198 to 208 (TKHEQRKDSIK) the composition is skewed to basic and acidic residues. The segment covering 234–248 (SDSSSHASQSEEQAQ) has biased composition (low complexity). 2 C2H2-type zinc fingers span residues 282-304 (FKCPYCTHVVKRKADLKRHLRCH) and 310-333 (YPCQACGKRFSRLDHLSSHFRTIH). Lys437 participates in a covalent cross-link: Glycyl lysine isopeptide (Lys-Gly) (interchain with G-Cter in SUMO2).

Its subcellular location is the nucleus. May be involved in transcriptional regulation. The polypeptide is Zinc finger and BTB domain-containing protein 8A (ZBTB8A) (Bos taurus (Bovine)).